A 330-amino-acid polypeptide reads, in one-letter code: Aspartate--ammonia ligase (330 aa).

The protein belongs to the class-II aminoacyl-tRNA synthetase family. AsnA subfamily.

It is found in the cytoplasm. The enzyme catalyses L-aspartate + NH4(+) + ATP = L-asparagine + AMP + diphosphate + H(+). It functions in the pathway amino-acid biosynthesis; L-asparagine biosynthesis; L-asparagine from L-aspartate (ammonia route): step 1/1. This chain is Aspartate--ammonia ligase, found in Haemophilus ducreyi (strain 35000HP / ATCC 700724).